The chain runs to 347 residues: Spermidine/putrescine import ATP-binding protein PotA (347 aa).

Residues 6 to 236 (IEIKNVYKEF…PKNAFVAKFI (231 aa)) enclose the ABC transporter domain. Residue 38–45 (GPSGCGKT) participates in ATP binding.

Belongs to the ABC transporter superfamily. Spermidine/putrescine importer (TC 3.A.1.11.1) family. The complex is composed of two ATP-binding proteins (PotA), two transmembrane proteins (PotB and PotC) and a solute-binding protein (PotD).

The protein localises to the cell membrane. It carries out the reaction ATP + H2O + polyamine-[polyamine-binding protein]Side 1 = ADP + phosphate + polyamineSide 2 + [polyamine-binding protein]Side 1.. Its function is as follows. Part of the ABC transporter complex PotABCD involved in spermidine/putrescine import. Responsible for energy coupling to the transport system. In Clostridium novyi (strain NT), this protein is Spermidine/putrescine import ATP-binding protein PotA.